The chain runs to 297 residues: Cell division protein FtsX (297 aa).

The Cytoplasmic portion of the chain corresponds to 1 to 24; the sequence is MKAKTLSRHLREGVKNLSRNGWMT. Residues 25–45 form a helical membrane-spanning segment; it reads FASVSAVTVTLLLVGVFLTAI. The Extracellular portion of the chain corresponds to 46-171; the sequence is MNMNHFATKV…LFDTVKTGRN (126 aa). Residues 172-192 form a helical membrane-spanning segment; the sequence is IGIVLIAGLLFTAMFLISNTI. Residues 193-219 are Cytoplasmic-facing; sequence KITIYARSTEIEIMKLVGATNWFIRWP. A helical transmembrane segment spans residues 220 to 240; the sequence is FLLEGLFLGVLGSIIPIGLIL. The Extracellular portion of the chain corresponds to 241-270; the sequence is VTYNSLQGMFNEKLGGTIFELLPYSPFVFQ. Residues 271–291 form a helical membrane-spanning segment; it reads LAGLLVLIGALIGMWGSVMSI. Residues 292–297 lie on the Cytoplasmic side of the membrane; that stretch reads RRFLKV.

It belongs to the ABC-4 integral membrane protein family. FtsX subfamily. Interacts with FtsE.

The protein resides in the cell membrane. In terms of biological role, part of the ABC transporter FtsEX involved in asymmetric cellular division facilitating the initiation of sporulation. The protein is Cell division protein FtsX of Bacillus anthracis.